The following is a 412-amino-acid chain: NADH-quinone oxidoreductase subunit D (412 aa).

Belongs to the complex I 49 kDa subunit family. As to quaternary structure, NDH-1 is composed of 14 different subunits. Subunits NuoB, C, D, E, F, and G constitute the peripheral sector of the complex.

It localises to the cell inner membrane. The enzyme catalyses a quinone + NADH + 5 H(+)(in) = a quinol + NAD(+) + 4 H(+)(out). In terms of biological role, NDH-1 shuttles electrons from NADH, via FMN and iron-sulfur (Fe-S) centers, to quinones in the respiratory chain. The immediate electron acceptor for the enzyme in this species is believed to be a menaquinone. Couples the redox reaction to proton translocation (for every two electrons transferred, four hydrogen ions are translocated across the cytoplasmic membrane), and thus conserves the redox energy in a proton gradient. The polypeptide is NADH-quinone oxidoreductase subunit D (Flavobacterium johnsoniae (strain ATCC 17061 / DSM 2064 / JCM 8514 / BCRC 14874 / CCUG 350202 / NBRC 14942 / NCIMB 11054 / UW101) (Cytophaga johnsonae)).